We begin with the raw amino-acid sequence, 324 residues long: NADH-ubiquinone oxidoreductase chain 1 (324 aa).

Transmembrane regions (helical) follow at residues 3–23, 77–97, 104–124, 150–170, 174–194, 226–246, 250–270, and 297–317; these read FILS…SVAF, ISPI…PFFV, LGGL…MVAG, LALI…IYFF, IYMW…TISL, LIFM…CVIF, DVFN…FIWA, and YLLF…WIFF.

Belongs to the complex I subunit 1 family.

Its subcellular location is the mitochondrion inner membrane. It catalyses the reaction a ubiquinone + NADH + 5 H(+)(in) = a ubiquinol + NAD(+) + 4 H(+)(out). In terms of biological role, core subunit of the mitochondrial membrane respiratory chain NADH dehydrogenase (Complex I) that is believed to belong to the minimal assembly required for catalysis. Complex I functions in the transfer of electrons from NADH to the respiratory chain. The immediate electron acceptor for the enzyme is believed to be ubiquinone. The chain is NADH-ubiquinone oxidoreductase chain 1 (mt:ND1) from Drosophila yakuba (Fruit fly).